The chain runs to 152 residues: MTVTDIVLVLFIVALLAYAFYDEFIMPRRNGETLLAVPLLRRGRVDAFIFAGLLAILIYNNVMSQGALLTTWLLCVLALMAFYLFWIRAPKIIFKSHGFFFANIWIEYNRIKEMNLSEDGVLVIQLEQRRLLVRVKNIDDLEKIYKIMVKTQ.

The next 3 membrane-spanning stretches (helical) occupy residues 6 to 26 (IVLV…EFIM), 45 to 65 (VDAF…VMSQ), and 67 to 87 (ALLT…LFWI).

It belongs to the UPF0266 family.

The protein localises to the cell inner membrane. This chain is UPF0266 membrane protein Ent638_2389, found in Enterobacter sp. (strain 638).